A 182-amino-acid polypeptide reads, in one-letter code: Ribosome-recycling factor (182 aa).

It belongs to the RRF family.

Its subcellular location is the cytoplasm. Its function is as follows. Responsible for the release of ribosomes from messenger RNA at the termination of protein biosynthesis. May increase the efficiency of translation by recycling ribosomes from one round of translation to another. This chain is Ribosome-recycling factor, found in Nostoc punctiforme (strain ATCC 29133 / PCC 73102).